The primary structure comprises 782 residues: Transcription factor Sp4 (782 aa).

3 disordered regions span residues 1–48 (MSDQ…PLAL), 107–148 (PPAS…TPNQ), and 275–385 (GGGT…QNAQ). Ser44 carries the phosphoserine modification. Residues 107–119 (PPASKENNVSQPA) are compositionally biased toward polar residues. 2 stretches are compositionally biased toward low complexity: residues 120-146 (SSSS…PSTP) and 281-342 (VGQP…SADT). Residues 344–354 (QYASTSASSSE) are compositionally biased toward polar residues. Low complexity predominate over residues 364-378 (AATESEAQSSSQLQS). The short motif at 465-473 (ISWQTVQVQ) is the 9aaTAD; inactive element. C2H2-type zinc fingers lie at residues 645–669 (HVCH…LRWH), 675–699 (FICN…RRTH), and 705–727 (FECP…VKTH).

The protein belongs to the Sp1 C2H2-type zinc-finger protein family. In terms of tissue distribution, expressed in many tissues.

It is found in the nucleus. In terms of biological role, binds to GT and GC boxes promoters elements. Probable transcriptional activator. Required for normal male reproductive behavior. In Mus musculus (Mouse), this protein is Transcription factor Sp4 (Sp4).